An 82-amino-acid chain; its full sequence is RNA-binding protein Hfq (82 aa).

The Sm domain maps to 11 to 71 (DTFLNHVRKT…ISTIMPGAPI (61 aa)).

Belongs to the Hfq family. In terms of assembly, homohexamer.

Functionally, RNA chaperone that binds small regulatory RNA (sRNAs) and mRNAs to facilitate mRNA translational regulation in response to envelope stress, environmental stress and changes in metabolite concentrations. Also binds with high specificity to tRNAs. The chain is RNA-binding protein Hfq from Bradyrhizobium diazoefficiens (strain JCM 10833 / BCRC 13528 / IAM 13628 / NBRC 14792 / USDA 110).